The following is a 580-amino-acid chain: Jasmonoyl--L-amino acid synthetase JAR6 (580 aa).

Serine 100 provides a ligand contact to ATP. Serine 103 provides a ligand contact to jasmonate. ATP is bound by residues methionine 120, threonine 123, glycine 164, asparagine 169, and 332–337 (GSSEGW). An an L-alpha-amino acid-binding site is contributed by 167 to 171 (TTNVY). 329–332 (ADYG) serves as a coordination point for jasmonate. 534–538 (KILDH) is an an L-alpha-amino acid binding site.

Belongs to the IAA-amido conjugating enzyme family.

The enzyme catalyses a jasmonate + an L-alpha-amino acid + ATP = a jasmonyl-L-amino acid + AMP + diphosphate + H(+). Catalyzes the synthesis of jasmonate-amino acid conjugates by adenylation. Catalyzes the conjugation of jasmonate (JA) to Ile, Leu and Val. Catalyzes the conjugation of JA to Ile that may mediate defense signaling and resistance to the herbivore Manduca sexta caterpillars. This Nicotiana attenuata (Coyote tobacco) protein is Jasmonoyl--L-amino acid synthetase JAR6 (JAR6).